A 141-amino-acid chain; its full sequence is Hemoglobin subunit alpha-A (141 aa).

The Globin domain occupies 1 to 141 (VLSAADKTNV…VSTVLTAKYR (141 aa)). Position 58 (His58) interacts with O2. Heme b is bound at residue His87.

It belongs to the globin family. In terms of assembly, heterotetramer of two alpha chains and two beta chains. Red blood cells.

Its function is as follows. Involved in oxygen transport from the lung to the various peripheral tissues. The polypeptide is Hemoglobin subunit alpha-A (HBAA) (Eudynamys scolopaceus (Western koel)).